The following is a 1096-amino-acid chain: DNA-directed RNA polymerase subunit beta (1096 aa).

The protein belongs to the RNA polymerase beta chain family. In plastids the minimal PEP RNA polymerase catalytic core is composed of four subunits: alpha, beta, beta', and beta''. When a (nuclear-encoded) sigma factor is associated with the core the holoenzyme is formed, which can initiate transcription.

It is found in the plastid. It localises to the chloroplast. It carries out the reaction RNA(n) + a ribonucleoside 5'-triphosphate = RNA(n+1) + diphosphate. Its function is as follows. DNA-dependent RNA polymerase catalyzes the transcription of DNA into RNA using the four ribonucleoside triphosphates as substrates. The sequence is that of DNA-directed RNA polymerase subunit beta from Guillardia theta (Cryptophyte).